Reading from the N-terminus, the 111-residue chain is uncharacterized protein (111 aa).

This is an uncharacterized protein from Paracoccus denitrificans.